Reading from the N-terminus, the 90-residue chain is DNA-binding protein HRm (90 aa).

It belongs to the bacterial histone-like protein family.

In terms of biological role, histone-like DNA-binding protein which is capable of wrapping DNA to stabilize it, and thus to prevent its denaturation under extreme environmental conditions. The sequence is that of DNA-binding protein HRm (hupB) from Rhizobium meliloti (strain 1021) (Ensifer meliloti).